The sequence spans 154 residues: Ribonuclease H (154 aa).

The region spanning 1–142 is the RNase H type-1 domain; that stretch reads MQKQIEIFTD…CDELAKKGAE (142 aa). Mg(2+) contacts are provided by aspartate 10, glutamate 48, aspartate 70, and aspartate 134.

The protein belongs to the RNase H family. Monomer. Mg(2+) is required as a cofactor.

It is found in the cytoplasm. It catalyses the reaction Endonucleolytic cleavage to 5'-phosphomonoester.. In terms of biological role, endonuclease that specifically degrades the RNA of RNA-DNA hybrids. The protein is Ribonuclease H of Haemophilus influenzae (strain 86-028NP).